We begin with the raw amino-acid sequence, 507 residues long: MFS-type transporter acdC (507 aa).

Positions 1 to 50 (MSPNAPAVDIGAAPSLDTPEGDTKQPAEDHVEKDSNLVDWDGPDDPEHPQ) are disordered. The segment covering 21–36 (GDTKQPAEDHVEKDSN) has biased composition (basic and acidic residues). N51 is a glycosylation site (N-linked (GlcNAc...) asparagine). A helical transmembrane segment spans residues 58–78 (WGITFSLASMTMWITFSSSVL). Residue N90 is glycosylated (N-linked (GlcNAc...) asparagine). Transmembrane regions (helical) follow at residues 95 to 115 (VMPLATTLVIFGFALGPLCWA), 125 to 145 (LPTFLGYGVFAIFQVPVAVAP), 155 to 175 (FFVGVFGSSALSVGPGVMADI), 186 to 206 (PFFFAANLLGPILGPIIGGFI), and 215 to 235 (WTAWLTLITSIFFGVLALLIV). A glycan (N-linked (GlcNAc...) asparagine) is linked at N257. Helical transmembrane passes span 290–310 (PILICFTVYLSLIYGILYLFL), 328–348 (IAGLPFLGILVGMVLGIGIII), 371–391 (LVEMMLTSITMPIGLFWFGWA), 395–415 (HWMVQTIAGVPLGIGLFVLFM), 442–462 (FLGGSFPLFATAMYHNLGVDW), and 466–486 (ILGFISVAMVPIPFAFYIFGA).

Belongs to the major facilitator superfamily. CAR1 family.

The protein localises to the membrane. MFS-type transporter; part of the gene cluster that mediates the biosynthesis of aspcandine, a pyrrolobenzazepine alkaloid. The polypeptide is MFS-type transporter acdC (Aspergillus candidus).